Consider the following 475-residue polypeptide: Trifunctional enzyme subunit beta, mitochondrial (475 aa).

A mitochondrion-targeting transit peptide spans 1–34 (MISLLTYTLKNLPNTSKWALRFCMRPLSSSSQLQ). K73 carries the N6-acetyllysine; alternate modification. K73 bears the N6-succinyllysine; alternate mark. Catalysis depends on C139, which acts as the Acyl-thioester intermediate. Residues 174-221 (IRHSRKMRKMMLDLNKAKTLAQRLSIISKFRLNFLSPELPAVSEFSTS) lie within the membrane without spanning it. N6-acetyllysine; alternate is present on K189. K189 carries the N6-succinyllysine; alternate modification. Residues K191 and K292 each carry the N6-succinyllysine modification. K294 bears the N6-acetyllysine; alternate mark. K294 carries the post-translational modification N6-succinyllysine; alternate. K299 bears the N6-acetyllysine mark. K333 is subject to N6-acetyllysine; alternate. At K333 the chain carries N6-succinyllysine; alternate. An N6-acetyllysine mark is found at K349 and K362. The Proton donor/acceptor role is filled by C459.

Belongs to the thiolase-like superfamily. Thiolase family. As to quaternary structure, heterotetramer of 2 alpha/HADHA and 2 beta/HADHB subunits; forms the mitochondrial trifunctional enzyme. Also purified as higher order heterooligomers including a 4 alpha/HADHA and 4 beta/HADHB heterooligomer which physiological significance remains unclear. The mitochondrial trifunctional enzyme interacts with MTLN. Interacts with RSAD2/viperin.

The protein localises to the mitochondrion. Its subcellular location is the mitochondrion inner membrane. It is found in the mitochondrion outer membrane. The protein resides in the endoplasmic reticulum. The catalysed reaction is an acyl-CoA + acetyl-CoA = a 3-oxoacyl-CoA + CoA. It carries out the reaction butanoyl-CoA + acetyl-CoA = 3-oxohexanoyl-CoA + CoA. The enzyme catalyses hexanoyl-CoA + acetyl-CoA = 3-oxooctanoyl-CoA + CoA. It catalyses the reaction octanoyl-CoA + acetyl-CoA = 3-oxodecanoyl-CoA + CoA. The catalysed reaction is decanoyl-CoA + acetyl-CoA = 3-oxododecanoyl-CoA + CoA. It carries out the reaction dodecanoyl-CoA + acetyl-CoA = 3-oxotetradecanoyl-CoA + CoA. The enzyme catalyses tetradecanoyl-CoA + acetyl-CoA = 3-oxohexadecanoyl-CoA + CoA. It participates in lipid metabolism; fatty acid beta-oxidation. Functionally, mitochondrial trifunctional enzyme catalyzes the last three of the four reactions of the mitochondrial beta-oxidation pathway. The mitochondrial beta-oxidation pathway is the major energy-producing process in tissues and is performed through four consecutive reactions breaking down fatty acids into acetyl-CoA. Among the enzymes involved in this pathway, the trifunctional enzyme exhibits specificity for long-chain fatty acids. Mitochondrial trifunctional enzyme is a heterotetrameric complex composed of two proteins, the trifunctional enzyme subunit alpha/HADHA carries the 2,3-enoyl-CoA hydratase and the 3-hydroxyacyl-CoA dehydrogenase activities, while the trifunctional enzyme subunit beta/HADHB described here bears the 3-ketoacyl-CoA thiolase activity. The protein is Trifunctional enzyme subunit beta, mitochondrial (HADHB) of Bos taurus (Bovine).